Consider the following 235-residue polypeptide: Transmembrane emp24 domain-containing protein 9 (235 aa).

The first 37 residues, 1–37 (MAVELGVLLVRPRPGTGLGRVMRTLLLVLWLATRGSA), serve as a signal peptide directing secretion. The Lumenal portion of the chain corresponds to 38-202 (LYFHIGETEK…RQTSESTNQR (165 aa)). Positions 47–145 (KKCFIEEIPD…MLRVHLDIQV (99 aa)) constitute a GOLD domain. The tract at residues 121–160 (CLHSNSTKFSLFAGGMLRVHLDIQVGEHANDYAEIAAKDK) is required for interaction with STX17. The N-linked (GlcNAc...) asparagine glycan is linked to Asn-125. Positions 154-184 (EIAAKDKLSELQLRVRQLVEQVEQIQKEQNY) form a coiled coil. Lys-160 is modified (N6-acetyllysine). A helical transmembrane segment spans residues 203–222 (VLWWSILQTLILVAIGVWQM). The Cytoplasmic segment spans residues 223-235 (RHLKSFFEAKKLV). The short motif at 228–229 (FF) is the COPII vesicle coat-binding element. A COPI vesicle coat-binding motif is present at residues 228–235 (FFEAKKLV).

This sequence belongs to the EMP24/GP25L family. As to quaternary structure, monomer and homodimer in endoplasmic reticulum. Predominantly monomeric and to lesser extent homodimeric in endoplasmic reticulum-Golgi intermediate compartment and cis-Golgi network. Probably oligomerizes with other members of the EMP24/GP25L family such as TMED2, TMED7 and TMED10. Interacts with TMED5. Interacts (via C-terminus) with COPG1; the interaction involves dimeric TMED9. Interacts with PTPN2 and SPAST. Interacts with STX17; the interaction is direct. In terms of processing, N-linked glycosylated containing high mannose.

It is found in the endoplasmic reticulum membrane. It localises to the golgi apparatus. The protein resides in the cis-Golgi network membrane. The protein localises to the endoplasmic reticulum-Golgi intermediate compartment membrane. Its subcellular location is the trans-Golgi network membrane. In terms of biological role, appears to be involved in vesicular protein trafficking, mainly in the early secretory pathway. In COPI vesicle-mediated retrograde transport involved in the coatomer recruitment to membranes of the early secretory pathway. Increases coatomer-dependent activity of ARFGAP2. Thought to play a crucial role in the specific retention of p24 complexes in cis-Golgi membranes; specifically contributes to the coupled localization of TMED2 and TMED10 in the cis-Golgi network. May be involved in organization of intracellular membranes, such as of the ER-Golgi intermediate compartment and the Golgi apparatus. Involved in ER localization of PTPN2 isoform PTPB. The sequence is that of Transmembrane emp24 domain-containing protein 9 (TMED9) from Homo sapiens (Human).